A 283-amino-acid chain; its full sequence is Bifunctional protein FolD (283 aa).

Residues 163-165 (GRS), serine 188, and isoleucine 229 contribute to the NADP(+) site.

This sequence belongs to the tetrahydrofolate dehydrogenase/cyclohydrolase family. As to quaternary structure, homodimer.

The catalysed reaction is (6R)-5,10-methylene-5,6,7,8-tetrahydrofolate + NADP(+) = (6R)-5,10-methenyltetrahydrofolate + NADPH. The enzyme catalyses (6R)-5,10-methenyltetrahydrofolate + H2O = (6R)-10-formyltetrahydrofolate + H(+). It participates in one-carbon metabolism; tetrahydrofolate interconversion. In terms of biological role, catalyzes the oxidation of 5,10-methylenetetrahydrofolate to 5,10-methenyltetrahydrofolate and then the hydrolysis of 5,10-methenyltetrahydrofolate to 10-formyltetrahydrofolate. The chain is Bifunctional protein FolD from Campylobacter concisus (strain 13826).